Reading from the N-terminus, the 315-residue chain is tRNA pseudouridine synthase B (315 aa).

Aspartate 47 acts as the Nucleophile in catalysis.

Belongs to the pseudouridine synthase TruB family. Type 1 subfamily.

The catalysed reaction is uridine(55) in tRNA = pseudouridine(55) in tRNA. Responsible for synthesis of pseudouridine from uracil-55 in the psi GC loop of transfer RNAs. In Shewanella pealeana (strain ATCC 700345 / ANG-SQ1), this protein is tRNA pseudouridine synthase B.